A 106-amino-acid chain; its full sequence is Large ribosomal subunit protein eL42 (106 aa).

Belongs to the eukaryotic ribosomal protein eL42 family.

The polypeptide is Large ribosomal subunit protein eL42 (RPL44) (Wickerhamomyces ciferrii (strain ATCC 14091 / BCRC 22168 / CBS 111 / JCM 3599 / NBRC 0793 / NRRL Y-1031 F-60-10) (Yeast)).